Here is a 597-residue protein sequence, read N- to C-terminus: Arginine--tRNA ligase (597 aa).

Residues 125 to 135 (PNTNKPLHLGH) carry the 'HIGH' region motif.

The protein belongs to the class-I aminoacyl-tRNA synthetase family. As to quaternary structure, monomer.

It localises to the cytoplasm. It catalyses the reaction tRNA(Arg) + L-arginine + ATP = L-arginyl-tRNA(Arg) + AMP + diphosphate. In Bacteroides thetaiotaomicron (strain ATCC 29148 / DSM 2079 / JCM 5827 / CCUG 10774 / NCTC 10582 / VPI-5482 / E50), this protein is Arginine--tRNA ligase.